A 261-amino-acid polypeptide reads, in one-letter code: Zinc finger protein 664 (261 aa).

C2H2-type zinc fingers lie at residues 3-25 (YKCP…QKIH), 31-53 (HKCD…WRDH), 59-81 (YKCD…KKIH), 87-109 (YKCY…MRVH), 115-137 (YVCS…QRVH), 143-165 (FKCE…QRVH), 171-193 (YKCY…QRVH), 199-221 (YRCC…QRVH), and 227-249 (FKCD…QRVH). Residue lysine 257 forms a Glycyl lysine isopeptide (Lys-Gly) (interchain with G-Cter in SUMO2) linkage.

It belongs to the krueppel C2H2-type zinc-finger protein family.

It localises to the nucleus. May be involved in transcriptional regulation. This Mus musculus (Mouse) protein is Zinc finger protein 664 (Znf664).